The primary structure comprises 150 residues: D-aminoacyl-tRNA deacylase (150 aa).

The Gly-cisPro motif, important for rejection of L-amino acids signature appears at Gly138 to Pro139.

This sequence belongs to the DTD family. As to quaternary structure, homodimer.

It localises to the cytoplasm. It catalyses the reaction glycyl-tRNA(Ala) + H2O = tRNA(Ala) + glycine + H(+). It carries out the reaction a D-aminoacyl-tRNA + H2O = a tRNA + a D-alpha-amino acid + H(+). In terms of biological role, an aminoacyl-tRNA editing enzyme that deacylates mischarged D-aminoacyl-tRNAs. Also deacylates mischarged glycyl-tRNA(Ala), protecting cells against glycine mischarging by AlaRS. Acts via tRNA-based rather than protein-based catalysis; rejects L-amino acids rather than detecting D-amino acids in the active site. By recycling D-aminoacyl-tRNA to D-amino acids and free tRNA molecules, this enzyme counteracts the toxicity associated with the formation of D-aminoacyl-tRNA entities in vivo and helps enforce protein L-homochirality. The chain is D-aminoacyl-tRNA deacylase from Akkermansia muciniphila (strain ATCC BAA-835 / DSM 22959 / JCM 33894 / BCRC 81048 / CCUG 64013 / CIP 107961 / Muc).